Here is a 304-residue protein sequence, read N- to C-terminus: Ribosomal RNA large subunit methyltransferase F (304 aa).

Belongs to the methyltransferase superfamily. METTL16/RlmF family.

It localises to the cytoplasm. It catalyses the reaction adenosine(1618) in 23S rRNA + S-adenosyl-L-methionine = N(6)-methyladenosine(1618) in 23S rRNA + S-adenosyl-L-homocysteine + H(+). In terms of biological role, specifically methylates the adenine in position 1618 of 23S rRNA. This Klebsiella pneumoniae subsp. pneumoniae (strain ATCC 700721 / MGH 78578) protein is Ribosomal RNA large subunit methyltransferase F.